We begin with the raw amino-acid sequence, 410 residues long: Serine hydroxymethyltransferase (410 aa).

(6S)-5,6,7,8-tetrahydrofolate contacts are provided by residues Leu-119 and 123-125 (GHL). An N6-(pyridoxal phosphate)lysine modification is found at Lys-228. 351–353 (SPF) contributes to the (6S)-5,6,7,8-tetrahydrofolate binding site.

Belongs to the SHMT family. As to quaternary structure, homodimer. Pyridoxal 5'-phosphate serves as cofactor.

Its subcellular location is the cytoplasm. The catalysed reaction is (6R)-5,10-methylene-5,6,7,8-tetrahydrofolate + glycine + H2O = (6S)-5,6,7,8-tetrahydrofolate + L-serine. It functions in the pathway one-carbon metabolism; tetrahydrofolate interconversion. Its pathway is amino-acid biosynthesis; glycine biosynthesis; glycine from L-serine: step 1/1. In terms of biological role, catalyzes the reversible interconversion of serine and glycine with tetrahydrofolate (THF) serving as the one-carbon carrier. This reaction serves as the major source of one-carbon groups required for the biosynthesis of purines, thymidylate, methionine, and other important biomolecules. Also exhibits THF-independent aldolase activity toward beta-hydroxyamino acids, producing glycine and aldehydes, via a retro-aldol mechanism. In Alkaliphilus oremlandii (strain OhILAs) (Clostridium oremlandii (strain OhILAs)), this protein is Serine hydroxymethyltransferase.